Reading from the N-terminus, the 970-residue chain is Isoleucine--tRNA ligase (970 aa).

Residues 65-75 carry the 'HIGH' region motif; it reads PYANGHLHIGH. L-isoleucyl-5'-AMP is bound at residue Glu608. A 'KMSKS' region motif is present at residues 649 to 653; it reads KMSKS. Lys652 contributes to the ATP binding site. Residues Cys943, Cys946, Cys962, and Cys965 each contribute to the Zn(2+) site.

It belongs to the class-I aminoacyl-tRNA synthetase family. IleS type 1 subfamily. Monomer. The cofactor is Zn(2+).

The protein resides in the cytoplasm. It catalyses the reaction tRNA(Ile) + L-isoleucine + ATP = L-isoleucyl-tRNA(Ile) + AMP + diphosphate. Catalyzes the attachment of isoleucine to tRNA(Ile). As IleRS can inadvertently accommodate and process structurally similar amino acids such as valine, to avoid such errors it has two additional distinct tRNA(Ile)-dependent editing activities. One activity is designated as 'pretransfer' editing and involves the hydrolysis of activated Val-AMP. The other activity is designated 'posttransfer' editing and involves deacylation of mischarged Val-tRNA(Ile). This chain is Isoleucine--tRNA ligase, found in Ruegeria pomeroyi (strain ATCC 700808 / DSM 15171 / DSS-3) (Silicibacter pomeroyi).